Reading from the N-terminus, the 905-residue chain is Clumping factor B (905 aa).

The signal sequence occupies residues Met-1 to Ala-44. The YSIRK-G/S signaling motif motif lies at Tyr-15–Ser-26. 2 stretches are compositionally biased toward polar residues: residues Ala-44–Ala-61 and Met-68–Ser-101. The disordered stretch occupies residues Ala-44–Arg-191. Residues Ser-45–Asn-542 form a ligand binding A region region. The span at Thr-102–Pro-119 shows a compositional bias: low complexity. The segment covering Gln-134–Ser-189 has biased composition (polar residues). The MIDAS-like motif motif lies at Asp-272–Ser-276. A disordered region spans residues Tyr-530–Asn-877. Pro residues predominate over residues Asp-545–Glu-555. Positions Pro-556–Asp-829 are enriched in acidic residues. Residues Arg-833 to Pro-844 are compositionally biased toward polar residues. The segment covering His-861–Glu-874 has biased composition (basic and acidic residues). The short motif at Leu-866–Gly-870 is the LPXTG sorting signal element. At Thr-869 the chain carries Pentaglycyl murein peptidoglycan amidated threonine. The propeptide at Gly-870–Ala-905 is removed by sortase.

It belongs to the serine-aspartate repeat-containing protein (SDr) family. Proteolytically cleaved by aureolysin (aur). This cleavage leads to the inactivation of ClfB.

The protein localises to the secreted. It localises to the cell wall. In terms of biological role, cell surface-associated protein implicated in virulence by promoting bacterial attachment to both alpha- and beta-chains of human fibrinogen and inducing the formation of bacterial clumps. The polypeptide is Clumping factor B (clfB) (Staphylococcus aureus (strain MSSA476)).